We begin with the raw amino-acid sequence, 72 residues long: Translation initiation factor IF-1 (72 aa).

The 72-residue stretch at 1-72 (MAKDDVIEID…DKGRITFRYK (72 aa)) folds into the S1-like domain.

The protein belongs to the IF-1 family. As to quaternary structure, component of the 30S ribosomal translation pre-initiation complex which assembles on the 30S ribosome in the order IF-2 and IF-3, IF-1 and N-formylmethionyl-tRNA(fMet); mRNA recruitment can occur at any time during PIC assembly.

The protein resides in the cytoplasm. In terms of biological role, one of the essential components for the initiation of protein synthesis. Stabilizes the binding of IF-2 and IF-3 on the 30S subunit to which N-formylmethionyl-tRNA(fMet) subsequently binds. Helps modulate mRNA selection, yielding the 30S pre-initiation complex (PIC). Upon addition of the 50S ribosomal subunit IF-1, IF-2 and IF-3 are released leaving the mature 70S translation initiation complex. The chain is Translation initiation factor IF-1 from Sulfurovum sp. (strain NBC37-1).